A 165-amino-acid chain; its full sequence is Large ribosomal subunit protein uL10 (165 aa).

This sequence belongs to the universal ribosomal protein uL10 family. As to quaternary structure, part of the ribosomal stalk of the 50S ribosomal subunit. The N-terminus interacts with L11 and the large rRNA to form the base of the stalk. The C-terminus forms an elongated spine to which L12 dimers bind in a sequential fashion forming a multimeric L10(L12)X complex.

Functionally, forms part of the ribosomal stalk, playing a central role in the interaction of the ribosome with GTP-bound translation factors. The protein is Large ribosomal subunit protein uL10 of Mycoplasma capricolum subsp. capricolum (strain California kid / ATCC 27343 / NCTC 10154).